The sequence spans 289 residues: Protease HtpX homolog (289 aa).

The next 2 membrane-spanning stretches (helical) occupy residues 7–26 (TAALLAALSGLLIAISYWVI) and 31–48 (GLIIGIGLAAVTNLFSWY). Residue His132 participates in Zn(2+) binding. Glu133 is a catalytic residue. His136 contacts Zn(2+). Helical transmembrane passes span 151–171 (VAGAISFLAQMVSYSLWFGGG) and 182–202 (LGVLLTVMLAPLAATIIQLAI). Residue Glu207 coordinates Zn(2+).

The protein belongs to the peptidase M48B family. Zn(2+) serves as cofactor.

It localises to the cell inner membrane. In Nostoc punctiforme (strain ATCC 29133 / PCC 73102), this protein is Protease HtpX homolog.